Consider the following 546-residue polypeptide: 2-isopropylmalate synthase (546 aa).

Residues 8 to 271 enclose the Pyruvate carboxyltransferase domain; sequence ILIFDTTLRD…NSFFKRNPDS (264 aa). Residues D17, H208, H210, and N244 each contribute to the Mn(2+) site. The tract at residues 408 to 546 is regulatory domain; sequence QLSLVQVSCG…TNTFLSNNAN (139 aa).

Belongs to the alpha-IPM synthase/homocitrate synthase family. LeuA type 1 subfamily. As to quaternary structure, homodimer. Mn(2+) is required as a cofactor.

Its subcellular location is the cytoplasm. The enzyme catalyses 3-methyl-2-oxobutanoate + acetyl-CoA + H2O = (2S)-2-isopropylmalate + CoA + H(+). It functions in the pathway amino-acid biosynthesis; L-leucine biosynthesis; L-leucine from 3-methyl-2-oxobutanoate: step 1/4. Functionally, catalyzes the condensation of the acetyl group of acetyl-CoA with 3-methyl-2-oxobutanoate (2-ketoisovalerate) to form 3-carboxy-3-hydroxy-4-methylpentanoate (2-isopropylmalate). This chain is 2-isopropylmalate synthase, found in Prochlorococcus marinus (strain AS9601).